We begin with the raw amino-acid sequence, 632 residues long: U-box domain-containing protein 14 (632 aa).

The 75-residue stretch at 247-321 (VIPEYFRCPI…ALWCESNGIE (75 aa)) folds into the U-box domain. ARM repeat units lie at residues 377-416 (VDNRVCIAEAGAIPLLVELLSSPDPRTQEHSVTALLNLSI), 418-457 (EGNKGAIVDAGAITDIVEVLKNGSMEARENAAATLFSLSV), 459-498 (DENKVAIGAAGAIQALISLLEEGTRRGKKDAATAIFNLCI), 500-539 (QGNKSRAVKGGIVDPLTRLLKDAGGGMVDEALAILAILST), and 541-580 (QEGKTAIAEAESIPVLVEIIRTGSPRNRENAAAILWYLCI).

Homodimer. Interacts with SNL1. Binds to SD11, SD16, SD17, SD18, SD113, SD129 and SD25. As to expression, expressed in flowers, green siliques, seeds and rosette leaves.

The enzyme catalyses S-ubiquitinyl-[E2 ubiquitin-conjugating enzyme]-L-cysteine + [acceptor protein]-L-lysine = [E2 ubiquitin-conjugating enzyme]-L-cysteine + N(6)-ubiquitinyl-[acceptor protein]-L-lysine.. The protein operates within protein modification; protein ubiquitination. In terms of biological role, functions as an E3 ubiquitin ligase with specific E2 ubiquitin-conjugating enzymes. Undergoes auto-ubiquitination. The sequence is that of U-box domain-containing protein 14 (PUB14) from Arabidopsis thaliana (Mouse-ear cress).